The following is a 421-amino-acid chain: 4-hydroxy-3-methylbut-2-en-1-yl diphosphate synthase (flavodoxin) (421 aa).

[4Fe-4S] cluster-binding residues include Cys-298, Cys-301, Cys-344, and Glu-351.

The protein belongs to the IspG family. [4Fe-4S] cluster is required as a cofactor.

It catalyses the reaction (2E)-4-hydroxy-3-methylbut-2-enyl diphosphate + oxidized [flavodoxin] + H2O + 2 H(+) = 2-C-methyl-D-erythritol 2,4-cyclic diphosphate + reduced [flavodoxin]. It participates in isoprenoid biosynthesis; isopentenyl diphosphate biosynthesis via DXP pathway; isopentenyl diphosphate from 1-deoxy-D-xylulose 5-phosphate: step 5/6. Converts 2C-methyl-D-erythritol 2,4-cyclodiphosphate (ME-2,4cPP) into 1-hydroxy-2-methyl-2-(E)-butenyl 4-diphosphate. This Neisseria gonorrhoeae (strain ATCC 700825 / FA 1090) protein is 4-hydroxy-3-methylbut-2-en-1-yl diphosphate synthase (flavodoxin).